Reading from the N-terminus, the 253-residue chain is uncharacterized protein (253 aa).

C2HC LYAR-type zinc fingers lie at residues 1–26 (MVFF…FQCR) and 27–51 (NTTF…VKCI). Residues Cys-6, Cys-9, His-21, Cys-25, Cys-32, Cys-35, His-47, and Cys-50 each contribute to the Zn(2+) site. A coiled-coil region spans residues 136-171 (AAEADKMREEAIRKQEETQKMEKAQKEAAAAAKKET).

The protein localises to the nucleus. This is an uncharacterized protein from Caenorhabditis elegans.